A 389-amino-acid chain; its full sequence is Acyl-[acyl-carrier-protein] dehydrogenase MbtN (389 aa).

This sequence belongs to the acyl-CoA dehydrogenase family. It depends on FAD as a cofactor.

It functions in the pathway siderophore biosynthesis; mycobactin biosynthesis. Functionally, catalyzes the dehydrogenation at the alpha-beta position of ACP-bound acyl chains. This results in the introduction of a double bond in the lipidic chain, which is further transferred to the epsilon-amino group of lysine residue in the mycobactin core by MbtK. In Mycobacterium sp. (strain MCS), this protein is Acyl-[acyl-carrier-protein] dehydrogenase MbtN (mbtN).